Reading from the N-terminus, the 391-residue chain is ATP phosphoribosyltransferase regulatory subunit (391 aa).

This sequence belongs to the class-II aminoacyl-tRNA synthetase family. HisZ subfamily. Heteromultimer composed of HisG and HisZ subunits.

Its subcellular location is the cytoplasm. It participates in amino-acid biosynthesis; L-histidine biosynthesis; L-histidine from 5-phospho-alpha-D-ribose 1-diphosphate: step 1/9. Its function is as follows. Required for the first step of histidine biosynthesis. May allow the feedback regulation of ATP phosphoribosyltransferase activity by histidine. The polypeptide is ATP phosphoribosyltransferase regulatory subunit (Clostridium kluyveri (strain ATCC 8527 / DSM 555 / NBRC 12016 / NCIMB 10680 / K1)).